Consider the following 160-residue polypeptide: Cytochrome b6-f complex subunit 4 (160 aa).

3 helical membrane passes run 36 to 56 (LLYI…GLSV), 95 to 115 (LLGI…PFIE), and 128 to 148 (IAMA…IGAA).

It belongs to the cytochrome b family. PetD subfamily. In terms of assembly, the 4 large subunits of the cytochrome b6-f complex are cytochrome b6, subunit IV (17 kDa polypeptide, PetD), cytochrome f and the Rieske protein, while the 4 small subunits are PetG, PetL, PetM and PetN. The complex functions as a dimer.

Its subcellular location is the cellular thylakoid membrane. Its function is as follows. Component of the cytochrome b6-f complex, which mediates electron transfer between photosystem II (PSII) and photosystem I (PSI), cyclic electron flow around PSI, and state transitions. The sequence is that of Cytochrome b6-f complex subunit 4 from Synechococcus sp. (strain CC9311).